We begin with the raw amino-acid sequence, 212 residues long: Probable plastid-lipid-associated protein 11, chloroplastic (212 aa).

The transit peptide at 1–25 directs the protein to the chloroplast; the sequence is MALALSLSACSPPLRRTRRAGFRTS.

Belongs to the PAP/fibrillin family.

Its subcellular location is the plastid. It is found in the chloroplast thylakoid. The chain is Probable plastid-lipid-associated protein 11, chloroplastic (PAP11) from Arabidopsis thaliana (Mouse-ear cress).